A 163-amino-acid polypeptide reads, in one-letter code: Nucleotide-binding protein Tery_2743 (163 aa).

It belongs to the YajQ family.

Its function is as follows. Nucleotide-binding protein. This is Nucleotide-binding protein Tery_2743 from Trichodesmium erythraeum (strain IMS101).